Reading from the N-terminus, the 386-residue chain is Demethylsterigmatocystin 6-O-methyltransferase (386 aa).

Substrate is bound at residue 137-150 (FDISGPCTQILPDF). Residues 177–197 (MFEWMPQHPKHMESLGHLMAL) are substrate binding. S-adenosyl-L-methionine-binding positions include 228 to 229 (GG), Asp253, 273 to 274 (NF), and Arg289. Residue His293 is the Proton acceptor of the active site.

The protein belongs to the class I-like SAM-binding methyltransferase superfamily. Cation-independent O-methyltransferase family. COMT subfamily.

It catalyses the reaction 6-demethylsterigmatocystin + S-adenosyl-L-methionine = sterigmatocystin + S-adenosyl-L-homocysteine + H(+). It participates in mycotoxin biosynthesis; aflatoxin biosynthesis. Its function is as follows. Catalyzes both the conversion of demethylsterigmatocystin (DMST) to sterigmatocystin and the conversion of dihydrodemethylsterigmatocystin to dihydrosterigmatocystin (DHDMST) during aflatoxin biosynthesis. This chain is Demethylsterigmatocystin 6-O-methyltransferase (omtB), found in Aspergillus flavus (strain ATCC 200026 / FGSC A1120 / IAM 13836 / NRRL 3357 / JCM 12722 / SRRC 167).